The chain runs to 376 residues: 23S rRNA (uracil(747)-C(5))-methyltransferase RlmC (376 aa).

Residues C3, C11, C14, and C87 each coordinate [4Fe-4S] cluster. Residues Q212, F241, E262, and N307 each contribute to the S-adenosyl-L-methionine site. C334 acts as the Nucleophile in catalysis.

It belongs to the class I-like SAM-binding methyltransferase superfamily. RNA M5U methyltransferase family. RlmC subfamily.

It catalyses the reaction uridine(747) in 23S rRNA + S-adenosyl-L-methionine = 5-methyluridine(747) in 23S rRNA + S-adenosyl-L-homocysteine + H(+). Functionally, catalyzes the formation of 5-methyl-uridine at position 747 (m5U747) in 23S rRNA. The protein is 23S rRNA (uracil(747)-C(5))-methyltransferase RlmC of Salmonella choleraesuis (strain SC-B67).